A 400-amino-acid polypeptide reads, in one-letter code: 2-octaprenylphenol hydroxylase (400 aa).

Residues 49–52 (RVSA) and 297–303 (LAGQGVN) contribute to the FAD site.

It belongs to the UbiH/COQ6 family. As to quaternary structure, homotetramer. Component of the Ubi complex metabolon, which regroups five ubiquinone biosynthesis proteins (UbiE, UbiF, UbiG, UbiH and UbiI) and two accessory factors (UbiK and the lipid-binding protein UbiJ). Requires FAD as cofactor.

It is found in the cytoplasm. It carries out the reaction 2-all-trans-octaprenylphenol + NADPH + O2 + H(+) = 3-(all-trans-octaprenyl)benzene-1,2-diol + NADP(+) + H2O. The catalysed reaction is a 2-(all-trans-polyprenyl)phenol + NADPH + O2 + H(+) = a 3-(all-trans-polyprenyl)benzene-1,2-diol + NADP(+) + H2O. Its pathway is cofactor biosynthesis; ubiquinone biosynthesis. Functionally, FAD-dependent monooxygenase required for the aerobic hydroxylation of 2-octaprenylphenol to 2-octaprenyl-6-hydroxy-phenol, the first hydroxylation step in coenzyme Q (ubiquinone) biosynthesis. The polypeptide is 2-octaprenylphenol hydroxylase (Escherichia coli (strain K12)).